The following is an 841-amino-acid chain: Copper-transporting P-type ATPase (841 aa).

6 helical membrane passes run 186–206 (LWVS…PMLG), 218–238 (ATFI…LPFF), 256–276 (IGLG…APGI), 285–305 (GAAV…VFVG), 445–465 (AVFV…WAAI), and 474–494 (GLLA…GLAT). Asp-530 (4-aspartylphosphate intermediate) is an active-site residue. 2 helical membrane passes run 602-622 (GIAD…DLGI) and 638-658 (GKTV…AVAD). Mg(2+) is bound by residues Asp-729 and Asp-733. The next 2 helical transmembrane spans lie at 742–762 (VGIA…ITLV) and 800–820 (VAAG…IAAA).

It belongs to the cation transport ATPase (P-type) (TC 3.A.3) family. Type IB subfamily.

It is found in the cell membrane. It catalyses the reaction Cu(2+)(in) + ATP + H2O = Cu(2+)(out) + ADP + phosphate + H(+). Involved in copper efflux. This chain is Copper-transporting P-type ATPase (actP), found in Rhizobium leguminosarum bv. viciae.